The following is a 165-amino-acid chain: uncharacterized protein (165 aa).

The tract at residues 28 to 97 (EASAPSGNPP…QLSQSLEVPT (70 aa)) is disordered. The segment covering 34–47 (GNPPPPPPPPPPPI) has biased composition (pro residues). Polar residues-rich tracts occupy residues 54–66 (KSLN…QLDN) and 73–94 (AQHT…QSLE).

This is an uncharacterized protein from Rickettsia prowazekii (strain Madrid E).